The sequence spans 88 residues: Potassium channel toxin MeuTXKbeta3-meucin-24 (88 aa).

An N-terminal signal peptide occupies residues 1 to 22; the sequence is MMKQQFFLFLAVIVMISSVIEA. One can recognise a BetaSPN-type CS-alpha/beta domain in the interval 55–88; that stretch reads EYACPVIEKWCEDHCQAKNAIGRCENTECKCLSK. Intrachain disulfides connect C58-C78, C65-C83, and C69-C85.

The protein belongs to the long chain scorpion toxin family. Class 2 subfamily. In terms of tissue distribution, expressed by the venom gland.

The protein localises to the secreted. Its function is as follows. Inhibits voltage-gated potassium channels. Functionally, the synthetic meucin-24 inhibits the development of P.berghei ookinetes, kills intraerythrocytic P.falciparum, and is cytotoxic to the Drosophila S2 cells at micromolar concentrations. No antibacterial, antifungal and hemolytic activities have been found at micromolar concentrations. The protein is Potassium channel toxin MeuTXKbeta3-meucin-24 of Mesobuthus eupeus (Lesser Asian scorpion).